The chain runs to 137 residues: MADRRRGAARGGAARPRRRERKNIPRGRAYIHATFNNTIVTLTDPNGNVVAWSSAGSSGFKGTRKSTPYAAQVAAENAARKAMEHGMRQVDVYVKGAGAGREMAIRALAAAGLQVMSITDITPVPHNGCRPPKRRRT.

A disordered region spans residues 1 to 25 (MADRRRGAARGGAARPRRRERKNIP). Over residues 15 to 25 (RPRRRERKNIP) the composition is skewed to basic residues.

The protein belongs to the universal ribosomal protein uS11 family. As to quaternary structure, part of the 30S ribosomal subunit. Interacts with proteins S7 and S18. Binds to IF-3.

In terms of biological role, located on the platform of the 30S subunit, it bridges several disparate RNA helices of the 16S rRNA. Forms part of the Shine-Dalgarno cleft in the 70S ribosome. The chain is Small ribosomal subunit protein uS11 from Thermomicrobium roseum (strain ATCC 27502 / DSM 5159 / P-2).